Here is a 449-residue protein sequence, read N- to C-terminus: UDP-N-acetylmuramoylalanine--D-glutamate ligase (449 aa).

119-125 (GTNGKTT) serves as a coordination point for ATP.

The protein belongs to the MurCDEF family.

It is found in the cytoplasm. It carries out the reaction UDP-N-acetyl-alpha-D-muramoyl-L-alanine + D-glutamate + ATP = UDP-N-acetyl-alpha-D-muramoyl-L-alanyl-D-glutamate + ADP + phosphate + H(+). Its pathway is cell wall biogenesis; peptidoglycan biosynthesis. Cell wall formation. Catalyzes the addition of glutamate to the nucleotide precursor UDP-N-acetylmuramoyl-L-alanine (UMA). The protein is UDP-N-acetylmuramoylalanine--D-glutamate ligase of Lactococcus lactis subsp. cremoris (strain MG1363).